The primary structure comprises 53 residues: Small, acid-soluble spore protein K (53 aa).

Residues 1 to 53 (MGRQAEFWSESKNNSKIDGQPKAKARFASKRPNGTINTHPQERMRAANQQEEE) form a disordered region.

Belongs to the SspK family.

Its subcellular location is the spore core. This chain is Small, acid-soluble spore protein K, found in Bacillus cytotoxicus (strain DSM 22905 / CIP 110041 / 391-98 / NVH 391-98).